Consider the following 212-residue polypeptide: Uridine kinase (212 aa).

Residue 13–20 (GGSGSGKT) participates in ATP binding.

It belongs to the uridine kinase family.

It localises to the cytoplasm. The enzyme catalyses uridine + ATP = UMP + ADP + H(+). The catalysed reaction is cytidine + ATP = CMP + ADP + H(+). It functions in the pathway pyrimidine metabolism; CTP biosynthesis via salvage pathway; CTP from cytidine: step 1/3. Its pathway is pyrimidine metabolism; UMP biosynthesis via salvage pathway; UMP from uridine: step 1/1. This chain is Uridine kinase, found in Bacillus cereus (strain B4264).